We begin with the raw amino-acid sequence, 168 residues long: Large ribosomal subunit protein bL9 (168 aa).

The tract at residues 148–168 is disordered; that stretch reads ENGEGSVQPAAEAAEVASTEA. Residues 157 to 168 show a composition bias toward low complexity; that stretch reads AAEAAEVASTEA.

Belongs to the bacterial ribosomal protein bL9 family.

Binds to the 23S rRNA. The protein is Large ribosomal subunit protein bL9 of Herpetosiphon aurantiacus (strain ATCC 23779 / DSM 785 / 114-95).